The following is a 1323-amino-acid chain: uncharacterized protein (1323 aa).

Residues 1-11 (MRELQGDDSSR) are compositionally biased toward basic and acidic residues. Disordered regions lie at residues 1-57 (MREL…SSYY) and 79-112 (IHES…HSET). Residues 12–21 (KSPPSDSVVK) are compositionally biased toward low complexity. Phosphoserine is present on serine 24. The segment covering 27–40 (DYEHSLKSLQDERT) has biased composition (basic and acidic residues). 2 stretches are compositionally biased toward polar residues: residues 42–57 (NYPN…SSYY) and 80–105 (HESS…SSTI). WD repeat units follow at residues 271–314 (RHST…DRAI), 320–360 (GHTR…FPVN), 364–403 (DWHN…APLH), 409–449 (ENIT…EEPE), 453–494 (TTDS…KEGP), and 502–551 (GHTD…LNSM). Residues 671-779 (EELSWIGQKY…SYLSGNLSVD (109 aa)) enclose the RWD domain. The span at 879 to 888 (SNSVADSDST) shows a compositional bias: polar residues. The segment at 879–904 (SNSVADSDSTNYDDENSLNRGGTSES) is disordered. Residues 1265–1309 (CTFCCLSIHGLCIVCGLCLHVMHEDCYKEWFSNGDSISQSCSSGC) form an RING-type; degenerate zinc finger.

It belongs to the WD repeat WDR59 family.

Functionally, may be involved in telomere capping. This is an uncharacterized protein from Schizosaccharomyces pombe (strain 972 / ATCC 24843) (Fission yeast).